We begin with the raw amino-acid sequence, 310 residues long: AT-hook motif nuclear-localized protein 15 (310 aa).

Disordered regions lie at residues 15 to 112 (VESP…KESP) and 239 to 310 (EEEQ…PPSY). 2 stretches are compositionally biased toward polar residues: residues 31-41 (SNNNNPPTMTR) and 51-67 (TTNNSGSPNTQTQSQEE). Residues 88 to 100 (RRPRGRPPGSKNK) constitute a DNA-binding region (a.T hook). Over residues 94–104 (PPGSKNKPKSP) the composition is skewed to low complexity. A PPC domain is found at 112–251 (PNSLQSHVLE…QQQEQPLQLE (140 aa)). Residues 301-310 (GPPPRAPPSY) are compositionally biased toward pro residues.

The protein resides in the nucleus. Functionally, transcription factor that specifically binds AT-rich DNA sequences related to the nuclear matrix attachment regions (MARs). Binds the DNA sequence GNFEI (GA-negative feedback element I) in the GA3OX1 promoter. Negatively regulates plant innate immunity (PTI) to pathogens through the down-regulation of the PAMP-triggered FRK1 expression. This Arabidopsis thaliana (Mouse-ear cress) protein is AT-hook motif nuclear-localized protein 15.